The chain runs to 169 residues: Shikimate kinase (169 aa).

12 to 17 (GAGKST) provides a ligand contact to ATP. A Mg(2+)-binding site is contributed by Ser16. Positions 34, 58, and 80 each coordinate substrate. Arg117 contacts ATP. Arg136 lines the substrate pocket.

This sequence belongs to the shikimate kinase family. As to quaternary structure, monomer. Requires Mg(2+) as cofactor.

It localises to the cytoplasm. The catalysed reaction is shikimate + ATP = 3-phosphoshikimate + ADP + H(+). It functions in the pathway metabolic intermediate biosynthesis; chorismate biosynthesis; chorismate from D-erythrose 4-phosphate and phosphoenolpyruvate: step 5/7. Catalyzes the specific phosphorylation of the 3-hydroxyl group of shikimic acid using ATP as a cosubstrate. In Rhodococcus erythropolis (strain PR4 / NBRC 100887), this protein is Shikimate kinase.